Here is a 37-residue protein sequence, read N- to C-terminus: Cytochrome b6-f complex subunit 5 (37 aa).

Residues 5–25 form a helical membrane-spanning segment; sequence LLCGIVLGLIPITLAGLFMAA.

This sequence belongs to the PetG family. The 4 large subunits of the cytochrome b6-f complex are cytochrome b6, subunit IV (17 kDa polypeptide, PetD), cytochrome f and the Rieske protein, while the 4 small subunits are PetG, PetL, PetM and PetN. The complex functions as a dimer.

It localises to the cellular thylakoid membrane. In terms of biological role, component of the cytochrome b6-f complex, which mediates electron transfer between photosystem II (PSII) and photosystem I (PSI), cyclic electron flow around PSI, and state transitions. PetG is required for either the stability or assembly of the cytochrome b6-f complex. The chain is Cytochrome b6-f complex subunit 5 from Synechococcus elongatus (strain ATCC 33912 / PCC 7942 / FACHB-805) (Anacystis nidulans R2).